The following is a 266-amino-acid chain: 3-methyl-2-oxobutanoate hydroxymethyltransferase (266 aa).

Positions 47 and 86 each coordinate Mg(2+). 3-methyl-2-oxobutanoate contacts are provided by residues 47-48 (DS), Asp-86, and Lys-114. A Mg(2+)-binding site is contributed by Glu-116. The active-site Proton acceptor is Glu-183.

This sequence belongs to the PanB family. Homodecamer; pentamer of dimers. It depends on Mg(2+) as a cofactor.

Its subcellular location is the cytoplasm. The enzyme catalyses 3-methyl-2-oxobutanoate + (6R)-5,10-methylene-5,6,7,8-tetrahydrofolate + H2O = 2-dehydropantoate + (6S)-5,6,7,8-tetrahydrofolate. The protein operates within cofactor biosynthesis; (R)-pantothenate biosynthesis; (R)-pantoate from 3-methyl-2-oxobutanoate: step 1/2. Its function is as follows. Catalyzes the reversible reaction in which hydroxymethyl group from 5,10-methylenetetrahydrofolate is transferred onto alpha-ketoisovalerate to form ketopantoate. This Idiomarina loihiensis (strain ATCC BAA-735 / DSM 15497 / L2-TR) protein is 3-methyl-2-oxobutanoate hydroxymethyltransferase.